Here is a 478-residue protein sequence, read N- to C-terminus: MTMATTVSKGKVTQVIGAVVDVQFEGVLPAILNALETTNNGKKLILEVAQHLGENTVRCIAMDATEGLVRGAPVSDSGTPISVPVGNATLGRILNVVGEPIDERGPIAATEKRAIHQKAPDFQSQSTESQILVTGIKVIDLLAPYSKGGKIGLFGGAGVGKTVLIQELINNIAKVHSGYSVFAGVGERTREGNDLYHEFIESGVINIDDLEKSKVALVYGQMNEPPGARARVALTGLTLAEQFRDQSGTDVLFFVDNIFRFTQAGSEVSALLGRIPSAVGYQPTLATDMGQLQERITSTKAGSITSVQAIYVPADDLTDPAPATSFAHLDATTTLSRAISELGIYPAVDPLDSTSRLMDPQILGEEHYNTARAVQGILQRYKSLQDIIAILGMDELSEEDKLTVARARKIQRFLSQPFDVAQVFTGSPGVQVPLDKTIASFKAVVAGEYDHLPEAAFYMVGDIEEAKAKAAKLAAAAA.

155–162 (GGAGVGKT) lines the ATP pocket.

It belongs to the ATPase alpha/beta chains family. In terms of assembly, F-type ATPases have 2 components, CF(1) - the catalytic core - and CF(0) - the membrane proton channel. CF(1) has five subunits: alpha(3), beta(3), gamma(1), delta(1), epsilon(1). CF(0) has three main subunits: a(1), b(2) and c(9-12). The alpha and beta chains form an alternating ring which encloses part of the gamma chain. CF(1) is attached to CF(0) by a central stalk formed by the gamma and epsilon chains, while a peripheral stalk is formed by the delta and b chains.

The protein resides in the cell inner membrane. The catalysed reaction is ATP + H2O + 4 H(+)(in) = ADP + phosphate + 5 H(+)(out). Its function is as follows. Produces ATP from ADP in the presence of a proton gradient across the membrane. The catalytic sites are hosted primarily by the beta subunits. The protein is ATP synthase subunit beta of Fuscovulum blasticum (Rhodobacter blasticus).